Here is a 217-residue protein sequence, read N- to C-terminus: Uracil-DNA glycosylase (217 aa).

Catalysis depends on aspartate 62, which acts as the Proton acceptor.

It belongs to the uracil-DNA glycosylase (UDG) superfamily. UNG family.

The protein localises to the cytoplasm. It carries out the reaction Hydrolyzes single-stranded DNA or mismatched double-stranded DNA and polynucleotides, releasing free uracil.. Its function is as follows. Excises uracil residues from the DNA which can arise as a result of misincorporation of dUMP residues by DNA polymerase or due to deamination of cytosine. This Streptococcus pyogenes serotype M28 (strain MGAS6180) protein is Uracil-DNA glycosylase.